The sequence spans 550 residues: Glucose-6-phosphate isomerase (550 aa).

Glutamate 356 functions as the Proton donor in the catalytic mechanism. Residues histidine 387 and lysine 515 contribute to the active site.

The protein belongs to the GPI family.

The protein resides in the cytoplasm. The catalysed reaction is alpha-D-glucose 6-phosphate = beta-D-fructose 6-phosphate. It functions in the pathway carbohydrate biosynthesis; gluconeogenesis. It participates in carbohydrate degradation; glycolysis; D-glyceraldehyde 3-phosphate and glycerone phosphate from D-glucose: step 2/4. Catalyzes the reversible isomerization of glucose-6-phosphate to fructose-6-phosphate. This Vibrio parahaemolyticus serotype O3:K6 (strain RIMD 2210633) protein is Glucose-6-phosphate isomerase.